A 323-amino-acid polypeptide reads, in one-letter code: Methionyl-tRNA formyltransferase (323 aa).

115–118 contacts (6S)-5,6,7,8-tetrahydrofolate; it reads SLLP.

It belongs to the Fmt family.

It carries out the reaction L-methionyl-tRNA(fMet) + (6R)-10-formyltetrahydrofolate = N-formyl-L-methionyl-tRNA(fMet) + (6S)-5,6,7,8-tetrahydrofolate + H(+). Attaches a formyl group to the free amino group of methionyl-tRNA(fMet). The formyl group appears to play a dual role in the initiator identity of N-formylmethionyl-tRNA by promoting its recognition by IF2 and preventing the misappropriation of this tRNA by the elongation apparatus. The sequence is that of Methionyl-tRNA formyltransferase from Lactococcus lactis subsp. cremoris (strain SK11).